Reading from the N-terminus, the 435-residue chain is Methylenetetrahydrofolate--tRNA-(uracil-5-)-methyltransferase TrmFO (435 aa).

Position 10 to 15 (10 to 15) interacts with FAD; that stretch reads GAGLAG.

Belongs to the MnmG family. TrmFO subfamily. Homodimer. FAD serves as cofactor.

It localises to the cytoplasm. It catalyses the reaction uridine(54) in tRNA + (6R)-5,10-methylene-5,6,7,8-tetrahydrofolate + NADH + H(+) = 5-methyluridine(54) in tRNA + (6S)-5,6,7,8-tetrahydrofolate + NAD(+). The enzyme catalyses uridine(54) in tRNA + (6R)-5,10-methylene-5,6,7,8-tetrahydrofolate + NADPH + H(+) = 5-methyluridine(54) in tRNA + (6S)-5,6,7,8-tetrahydrofolate + NADP(+). Functionally, catalyzes the folate-dependent formation of 5-methyl-uridine at position 54 (M-5-U54) in all tRNAs. The sequence is that of Methylenetetrahydrofolate--tRNA-(uracil-5-)-methyltransferase TrmFO from Bacillus subtilis (strain 168).